We begin with the raw amino-acid sequence, 476 residues long: MAVPFVEDWDLVQTLGEGAYGEVQLAVNRITEEAVAVKIVDMKRAIDCPENIKKEICINKMLNHENVVKFYGHRREGNIQYLFLEYCSGGELFDRIEPDIGMPEQDAQRFFHQLMAGVVYLHGIGITHRDIKPENLLLDERDNLKISDFGLATVFRHNNRERLLNKMCGTLPYVAPELLKRKEFHAEPVDVWSCGIVLTAMLAGELPWDQPSDSCQEYSDWKEKKTYLNPWKKIDSAPLALLHKILVENPSARITIPDIKKDRWYNKPLNRGAKRPRATSGGMSESSSGFSKHIHSNLDFSPINSGSSEENVKFSSSQPEPRTGLSLWDTGPSNVDKLVQGISFSQPTCPDHMLVNSQLLGTPGSSQNPWQRLVKRMTRFFTKLDADKSYQCLKETFEKLGYQWKKSCMNQVTVSTMDRRNNKLIFKINLVEMDEKILVDFRLSKGDGLEFKRHFLKIKGKLSDIVSSQKVWFPVT.

Positions 1 to 265 (MAVPFVEDWD…IPDIKKDRWY (265 aa)) are interaction with CLSPN. The region spanning 9 to 265 (WDLVQTLGEG…IPDIKKDRWY (257 aa)) is the Protein kinase domain. ATP is bound by residues 15–23 (LGEGAYGEV) and K38. Catalysis depends on D130, which acts as the Proton acceptor. K132 participates in a covalent cross-link: Glycyl lysine isopeptide (Lys-Gly) (interchain with G-Cter in ubiquitin). Positions 267–329 (KPLNRGAKRP…EPRTGLSLWD (63 aa)) are disordered. S280 carries the phosphoserine; by PKB/AKT1 modification. The span at 280–291 (SGGMSESSSGFS) shows a compositional bias: low complexity. Phosphoserine is present on residues S286, S296, and S301. Residues 298-320 (LDFSPINSGSSEENVKFSSSQPE) show a composition bias toward polar residues. A phosphoserine; by ATM and ATR mark is found at S317 and S345. Residues 391 to 476 (QCLKETFEKL…SSQKVWFPVT (86 aa)) form an autoinhibitory region region. Residue K436 forms a Glycyl lysine isopeptide (Lys-Gly) (interchain with G-Cter in ubiquitin) linkage. S463, S467, and S468 each carry phosphoserine.

It belongs to the protein kinase superfamily. CAMK Ser/Thr protein kinase family. NIM1 subfamily. As to quaternary structure, interacts (phosphorylated by ATR) with RAD51. Interacts with and phosphorylates CLSPN, an adapter protein that regulates the ATR-dependent phosphorylation of CHEK1. Interacts with BRCA1. Interacts with and phosphorylates CDC25A, CDC25B and CDC25C. Interacts with FBXO6, which regulates CHEK1. Interacts with PPM1D, which regulates CHEK1 through dephosphorylation. Interacts with TIMELESS; DNA damage-dependent. Interacts with FEM1B; activates CHEK1 in response to stress. Interacts with TLK1. Interacts with XPO1 and YWHAZ. Interacts with CDK5RAP3; antagonizes CHEK1. Phosphorylated by ATR in a RAD17-dependent manner in response to ultraviolet irradiation and inhibition of DNA replication. Phosphorylated by ATM in response to ionizing irradiation. ATM and ATR can both phosphorylate Ser-317 and Ser-345 and this results in enhanced kinase activity. Phosphorylation at Ser-345 induces a change in the conformation of the protein, activates the kinase activity and is a prerequisite for interaction with FBXO6 and subsequent ubiquitination at Lys-436. Phosphorylation at Ser-345 also increases binding to 14-3-3 proteins and promotes nuclear retention. Conversely, dephosphorylation at Ser-345 by PPM1D may contribute to exit from checkpoint mediated cell cycle arrest. Phosphorylation at Ser-280 by AKT1/PKB, may promote mono and/or diubiquitination. Also phosphorylated at undefined residues during mitotic arrest, resulting in decreased activity. Post-translationally, ubiquitinated. Mono or diubiquitination promotes nuclear exclusion. The activated form (phosphorylated on Ser-345) is polyubiquitinated at Lys-436 by some SCF-type E3 ubiquitin ligase complex containing FBXO6 promoting its degradation. Ubiquitination and degradation are required to terminate the checkpoint and ensure that activated CHEK1 does not accumulate as cells progress through S phase, when replication forks encounter transient impediments during normal DNA replication. 'Lys-63'-mediated ubiquitination by TRAF4 at Lys-132 activates cell cycle arrest and activation of DNA repair. In terms of processing, proteolytically cleaved at the C-terminus by SPRTN during normal DNA replication, thereby promoting CHEK1 removal from chromatin and activating the protein kinase activity. In terms of tissue distribution, expressed in brain, heart, liver, lung, skeletal muscle, spleen and testis. As to expression, expressed only in liver.

The protein resides in the nucleus. The protein localises to the chromosome. It is found in the cytoplasm. Its subcellular location is the cytoskeleton. It localises to the microtubule organizing center. The protein resides in the centrosome. The enzyme catalyses L-seryl-[protein] + ATP = O-phospho-L-seryl-[protein] + ADP + H(+). It carries out the reaction L-threonyl-[protein] + ATP = O-phospho-L-threonyl-[protein] + ADP + H(+). Activated through phosphorylation predominantly by ATR but also by ATM in response to DNA damage or inhibition of DNA replication. Activation is modulated by several mediators including CLSPN, BRCA1 and FEM1B. Proteolytic cleavage at the C-terminus by SPRTN during normal DNA replication activates the protein kinase activity. Serine/threonine-protein kinase which is required for checkpoint-mediated cell cycle arrest and activation of DNA repair in response to the presence of DNA damage or unreplicated DNA. May also negatively regulate cell cycle progression during unperturbed cell cycles. This regulation is achieved by a number of mechanisms that together help to preserve the integrity of the genome. Recognizes the substrate consensus sequence [R-X-X-S/T]. Binds to and phosphorylates CDC25A, CDC25B and CDC25C. Phosphorylation of CDC25A at 'Ser-178' and 'Thr-507' and phosphorylation of CDC25C at 'Ser-216' creates binding sites for 14-3-3 proteins which inhibit CDC25A and CDC25C. Phosphorylation of CDC25A at 'Ser-76', 'Ser-124', 'Ser-178', 'Ser-279' and 'Ser-293' promotes proteolysis of CDC25A. Phosphorylation of CDC25A at 'Ser-76' primes the protein for subsequent phosphorylation at 'Ser-79', 'Ser-82' and 'Ser-88' by NEK11, which is required for polyubiquitination and degradation of CDCD25A. Inhibition of CDC25 leads to increased inhibitory tyrosine phosphorylation of CDK-cyclin complexes and blocks cell cycle progression. Also phosphorylates NEK6. Binds to and phosphorylates RAD51 at 'Thr-309', which promotes the release of RAD51 from BRCA2 and enhances the association of RAD51 with chromatin, thereby promoting DNA repair by homologous recombination. Phosphorylates multiple sites within the C-terminus of TP53, which promotes activation of TP53 by acetylation and promotes cell cycle arrest and suppression of cellular proliferation. Also promotes repair of DNA cross-links through phosphorylation of FANCE. Binds to and phosphorylates TLK1 at 'Ser-743', which prevents the TLK1-dependent phosphorylation of the chromatin assembly factor ASF1A. This may enhance chromatin assembly both in the presence or absence of DNA damage. May also play a role in replication fork maintenance through regulation of PCNA. May regulate the transcription of genes that regulate cell-cycle progression through the phosphorylation of histones. Phosphorylates histone H3.1 (to form H3T11ph), which leads to epigenetic inhibition of a subset of genes. May also phosphorylate RB1 to promote its interaction with the E2F family of transcription factors and subsequent cell cycle arrest. Phosphorylates SPRTN, promoting SPRTN recruitment to chromatin. Reduces replication stress and activates the G2/M checkpoint, by phosphorylating and inactivating PABIR1/FAM122A and promoting the serine/threonine-protein phosphatase 2A-mediated dephosphorylation and stabilization of WEE1 levels and activity. This Rattus norvegicus (Rat) protein is Serine/threonine-protein kinase Chk1 (Chek1).